The primary structure comprises 84 residues: Putative membrane protein insertion efficiency factor (84 aa).

Positions G64 to E84 are disordered. A compositionally biased stretch (basic residues) spans H75–E84.

Belongs to the UPF0161 family.

Its subcellular location is the cell inner membrane. Its function is as follows. Could be involved in insertion of integral membrane proteins into the membrane. The protein is Putative membrane protein insertion efficiency factor of Caulobacter vibrioides (strain ATCC 19089 / CIP 103742 / CB 15) (Caulobacter crescentus).